Reading from the N-terminus, the 443-residue chain is ATP-dependent protease ATPase subunit HslU (443 aa).

ATP-binding positions include Val18 and 60–65 (GVGKTE). The interval 136 to 158 (LPPPRDFNEDSQRTNADSSTRQL) is disordered. A compositionally biased stretch (polar residues) spans 148-157 (RTNADSSTRQ). Positions 256, 321, and 393 each coordinate ATP.

The protein belongs to the ClpX chaperone family. HslU subfamily. A double ring-shaped homohexamer of HslV is capped on each side by a ring-shaped HslU homohexamer. The assembly of the HslU/HslV complex is dependent on binding of ATP.

The protein localises to the cytoplasm. Functionally, ATPase subunit of a proteasome-like degradation complex; this subunit has chaperone activity. The binding of ATP and its subsequent hydrolysis by HslU are essential for unfolding of protein substrates subsequently hydrolyzed by HslV. HslU recognizes the N-terminal part of its protein substrates and unfolds these before they are guided to HslV for hydrolysis. This chain is ATP-dependent protease ATPase subunit HslU, found in Marinobacter nauticus (strain ATCC 700491 / DSM 11845 / VT8) (Marinobacter aquaeolei).